Here is a 743-residue protein sequence, read N- to C-terminus: Catalase-peroxidase (743 aa).

Positions 1 to 21 are disordered; it reads MSENHETVVSELNEESGGGCP. Positions 108-231 form a cross-link, tryptophyl-tyrosyl-methioninium (Trp-Tyr) (with M-257); sequence WHSAGTYRIS…LGAVQMGLIY (124 aa). The Proton acceptor role is filled by His-109. Residues 231–257 constitute a cross-link (tryptophyl-tyrosyl-methioninium (Tyr-Met) (with W-108)); it reads YVNPEGPNGTPDPLAAARDIRETFRRM. His-272 is a binding site for heme b. A disordered region spans residues 275 to 296; sequence GKTHGAGDPDNVGPEPEGAPLE.

This sequence belongs to the peroxidase family. Peroxidase/catalase subfamily. As to quaternary structure, homodimer or homotetramer. Heme b serves as cofactor. In terms of processing, formation of the three residue Trp-Tyr-Met cross-link is important for the catalase, but not the peroxidase activity of the enzyme.

It catalyses the reaction H2O2 + AH2 = A + 2 H2O. The catalysed reaction is 2 H2O2 = O2 + 2 H2O. Functionally, bifunctional enzyme with both catalase and broad-spectrum peroxidase activity. The polypeptide is Catalase-peroxidase (Parafrankia sp. (strain EAN1pec)).